A 208-amino-acid polypeptide reads, in one-letter code: Crossover junction endodeoxyribonuclease RuvC (208 aa).

Residues D9, E70, and D143 contribute to the active site. 3 residues coordinate Mg(2+): D9, E70, and D143.

This sequence belongs to the RuvC family. Homodimer which binds Holliday junction (HJ) DNA. The HJ becomes 2-fold symmetrical on binding to RuvC with unstacked arms; it has a different conformation from HJ DNA in complex with RuvA. In the full resolvosome a probable DNA-RuvA(4)-RuvB(12)-RuvC(2) complex forms which resolves the HJ. It depends on Mg(2+) as a cofactor.

The protein resides in the cytoplasm. It carries out the reaction Endonucleolytic cleavage at a junction such as a reciprocal single-stranded crossover between two homologous DNA duplexes (Holliday junction).. In terms of biological role, the RuvA-RuvB-RuvC complex processes Holliday junction (HJ) DNA during genetic recombination and DNA repair. Endonuclease that resolves HJ intermediates. Cleaves cruciform DNA by making single-stranded nicks across the HJ at symmetrical positions within the homologous arms, yielding a 5'-phosphate and a 3'-hydroxyl group; requires a central core of homology in the junction. The consensus cleavage sequence is 5'-(A/T)TT(C/G)-3'. Cleavage occurs on the 3'-side of the TT dinucleotide at the point of strand exchange. HJ branch migration catalyzed by RuvA-RuvB allows RuvC to scan DNA until it finds its consensus sequence, where it cleaves and resolves the cruciform DNA. This is Crossover junction endodeoxyribonuclease RuvC from Leifsonia xyli subsp. xyli (strain CTCB07).